The following is a 500-amino-acid chain: L-arabinose isomerase (500 aa).

Glu-306, Glu-333, His-349, and His-448 together coordinate Mn(2+).

This sequence belongs to the arabinose isomerase family. Mn(2+) is required as a cofactor.

It catalyses the reaction beta-L-arabinopyranose = L-ribulose. It participates in carbohydrate degradation; L-arabinose degradation via L-ribulose; D-xylulose 5-phosphate from L-arabinose (bacterial route): step 1/3. Its function is as follows. Catalyzes the conversion of L-arabinose to L-ribulose. This is L-arabinose isomerase from Saccharophagus degradans (strain 2-40 / ATCC 43961 / DSM 17024).